The chain runs to 432 residues: CBL-interacting serine/threonine-protein kinase 17 (432 aa).

The Protein kinase domain maps to 11-266 (YELGRTLGEG…IAGIKAHDWF (256 aa)). Residues 17-25 (LGEGNSAKV) and K40 each bind ATP. The Proton acceptor role is filled by D134. The tract at residues 152-181 (DFGLSALSQHYREDGLLHTTCGSPNYVAPE) is activation loop. S156 is subject to Phosphoserine. At T170 the chain carries Phosphothreonine. In terms of domain architecture, NAF spans 301–325 (DSPTIINAFQLIGMSSFLDLSGFFE). The interval 331 to 360 (ERQIRFTSNSLAKDLLENIETIFTEMGFCL) is PPI.

Belongs to the protein kinase superfamily. CAMK Ser/Thr protein kinase family. SNF1 subfamily. In terms of assembly, interacts with CBL1. It depends on Mn(2+) as a cofactor.

It carries out the reaction L-seryl-[protein] + ATP = O-phospho-L-seryl-[protein] + ADP + H(+). It catalyses the reaction L-threonyl-[protein] + ATP = O-phospho-L-threonyl-[protein] + ADP + H(+). CIPK serine-threonine protein kinases interact with CBL proteins. Binding of a CBL protein to the regulatory NAF domain of CIPK protein lead to the activation of the kinase in a calcium-dependent manner. The sequence is that of CBL-interacting serine/threonine-protein kinase 17 (CIPK17) from Arabidopsis thaliana (Mouse-ear cress).